The primary structure comprises 449 residues: SUPPRESSOR OF GAMMA RESPONSE 1 (449 aa).

One can recognise an NAC domain in the interval 58-211; that stretch reads LPRGVKFDPS…DYVVSKIFYQ (154 aa). The DNA-binding element occupies 167 to 217; sequence RGCKKIMVLYGGKAVKTNWVMHQYHLGIEEDEKEGDYVVSKIFYQQPQQLV. The segment covering 324-336 has biased composition (basic and acidic residues); that stretch reads DDKEEQEKDRDNE. A disordered region spans residues 324–348; sequence DDKEEQEKDRDNENQGEEDPTWFDS.

In terms of processing, phosphorylated in a DNA stress-independent manner. Hyperphosphorylated on SQ motifs upon double-strand breaks, H(2)O(2) or zeocin treatments. Hyperphosphorylation is required for SOG1 function, and unlike constitutive phosphorylation, is ATM dependent. As to expression, expressed in shoot and root apical meristems, in lateral root primordia, in the vasculature of young leaves and in the root stele.

It localises to the nucleus. Functionally, transcription factor regulating the transcriptional activation response to gamma irradiation. Required for stem-cell death induced by UVB or by gamma irradiation. Not required for ATM activation, but participates in pathways governed by both ATM and ATR sensor kinases. Involved in DNA damage response (DDR) system that regulates cell cycle arrest. Functional homolog of animal p53. Regulates SMR5 and SMR7 transcription. Regulates DNA repair and cytokinin signaling separately and plays a key role in controlling lateral root formation under genotoxic stress. This chain is SUPPRESSOR OF GAMMA RESPONSE 1, found in Arabidopsis thaliana (Mouse-ear cress).